The following is a 221-amino-acid chain: 7-cyano-7-deazaguanine synthase (221 aa).

10–20 is a binding site for ATP; sequence LSGGLDSTTCM. Residues cysteine 188, cysteine 196, cysteine 199, and cysteine 202 each coordinate Zn(2+).

The protein belongs to the QueC family. Homodimer. Zn(2+) is required as a cofactor.

The enzyme catalyses 7-carboxy-7-deazaguanine + NH4(+) + ATP = 7-cyano-7-deazaguanine + ADP + phosphate + H2O + H(+). It functions in the pathway purine metabolism; 7-cyano-7-deazaguanine biosynthesis. Its function is as follows. Catalyzes the ATP-dependent conversion of 7-carboxy-7-deazaguanine (CDG) to 7-cyano-7-deazaguanine (preQ(0)). The protein is 7-cyano-7-deazaguanine synthase of Oceanobacillus iheyensis (strain DSM 14371 / CIP 107618 / JCM 11309 / KCTC 3954 / HTE831).